The sequence spans 89 residues: Small ribosomal subunit protein uS17 (89 aa).

The protein belongs to the universal ribosomal protein uS17 family. In terms of assembly, part of the 30S ribosomal subunit.

Functionally, one of the primary rRNA binding proteins, it binds specifically to the 5'-end of 16S ribosomal RNA. This is Small ribosomal subunit protein uS17 from Azoarcus sp. (strain BH72).